A 474-amino-acid chain; its full sequence is Trichothecene 3-O-acetyltransferase (474 aa).

This sequence belongs to the trichothecene 3-O-acetyltransferase family.

Its function is as follows. Trichothecene 3-O-acetyltransferase involved in self-protection against trichothecenes, mycotoxins acting as eukaryotic protein synthesis inhibitors. Its existence is surprising in a non-trichothecene producer organism which needs no self-protection again endogenic trichothecenes. The persistence of this non-essential gene may be due to a selective advantage that it may confer, like a resistance to exogenic trichothecenes. This is Trichothecene 3-O-acetyltransferase (AYT1) from Saccharomyces cerevisiae (strain ATCC 204508 / S288c) (Baker's yeast).